A 233-amino-acid chain; its full sequence is Nickel import system ATP-binding protein NikE (233 aa).

One can recognise an ABC transporter domain in the interval Ile2 to Val228. Gly35–Ser42 serves as a coordination point for ATP.

Belongs to the ABC transporter superfamily. The complex is composed of two ATP-binding proteins (NikD and NikE), two transmembrane proteins (NikB and NikC) and a solute-binding protein (NikA).

The protein localises to the cell membrane. The catalysed reaction is Ni(2+)(out) + ATP + H2O = Ni(2+)(in) + ADP + phosphate + H(+). In terms of biological role, part of the ABC transporter complex NikABCDE (Opp2) involved in nickel import. Probably responsible for energy coupling to the transport system. This Staphylococcus aureus (strain USA300) protein is Nickel import system ATP-binding protein NikE.